The chain runs to 200 residues: MRSPTLGVMFNHDALPSEHALRYLKAHLRNVPDFPKPGILFKDITPLLADPRALHITLDLLAQRFVGEHVDVVVGVESRGFIFGGALSARLNASFVPVRKPGKLPAATDRVAYALEYGTAELEMHKGSIRPGARVLIVDDLLATGGTASAAAELARKQGGEVAGFAFVVELDFLGGRALLAERAGDAAPVFSIVHFAAGE.

This sequence belongs to the purine/pyrimidine phosphoribosyltransferase family. As to quaternary structure, homodimer.

It localises to the cytoplasm. The catalysed reaction is AMP + diphosphate = 5-phospho-alpha-D-ribose 1-diphosphate + adenine. It functions in the pathway purine metabolism; AMP biosynthesis via salvage pathway; AMP from adenine: step 1/1. Functionally, catalyzes a salvage reaction resulting in the formation of AMP, that is energically less costly than de novo synthesis. The protein is Adenine phosphoribosyltransferase of Sorangium cellulosum (strain So ce56) (Polyangium cellulosum (strain So ce56)).